Consider the following 247-residue polypeptide: Cell division protein ZapD (247 aa).

It belongs to the ZapD family. As to quaternary structure, interacts with FtsZ.

The protein resides in the cytoplasm. Functionally, cell division factor that enhances FtsZ-ring assembly. Directly interacts with FtsZ and promotes bundling of FtsZ protofilaments, with a reduction in FtsZ GTPase activity. The sequence is that of Cell division protein ZapD from Citrobacter koseri (strain ATCC BAA-895 / CDC 4225-83 / SGSC4696).